Consider the following 181-residue polypeptide: Large ribosomal subunit protein uL5c (181 aa).

Belongs to the universal ribosomal protein uL5 family. In terms of assembly, part of the 50S ribosomal subunit; contacts the 5S rRNA.

It is found in the plastid. Its subcellular location is the chloroplast. Functionally, binds 5S rRNA, forms part of the central protuberance of the 50S subunit. This is Large ribosomal subunit protein uL5c (rpl5) from Rhodomonas salina (Cryptomonas salina).